We begin with the raw amino-acid sequence, 310 residues long: Glycine--tRNA ligase alpha subunit (310 aa).

The protein belongs to the class-II aminoacyl-tRNA synthetase family. As to quaternary structure, tetramer of two alpha and two beta subunits.

It is found in the cytoplasm. The catalysed reaction is tRNA(Gly) + glycine + ATP = glycyl-tRNA(Gly) + AMP + diphosphate. The chain is Glycine--tRNA ligase alpha subunit from Aliivibrio salmonicida (strain LFI1238) (Vibrio salmonicida (strain LFI1238)).